The sequence spans 157 residues: Ribosome maturation factor RimP (157 aa).

This sequence belongs to the RimP family.

The protein resides in the cytoplasm. Its function is as follows. Required for maturation of 30S ribosomal subunits. The polypeptide is Ribosome maturation factor RimP (Lactococcus lactis subsp. cremoris (strain MG1363)).